An 876-amino-acid chain; its full sequence is MDPAPSLGCSLKDVKWSPVAMPLDLLVSTYRLPQIARLDSGECVEGLRENDFLLIHSCRQWTTITAHSLEEGHYVIGPKIEIPVHYAGQFKLLEQDRDIKEPVQYFNSVEEVAKAFPERVYVMEEITFNVKVASGECNEDTEVYNITLCTGDELTLMGQAEILYAKTFKEKSRLNTIFKKIGKLNSISKLGKGKMPCLICMNHRTNESISLPFQCKGRFSTRSPLELQMQEGEHTIRNIVEKTRLPVNVTVPSPPPRNPYDLHFIREGHRYKFVNIQTKTVVVCCVLRNNKILPMHFPLHLTVPKFSLPEHQVKGDMWPETLVHHWLGICQEQFDIDEYSRAVRDVKTDWNEDCKSPKKGRCSGHNHLPNSLSYARDELTQSFHRLSVCVYGNNLHGNSEVNLHGCRDLGGEWAPFPHDILPYQDSGDSGSDYLFPEANEESAGIPGKTEVPYEELWLEEGKPSRQPLTRSLSEKSRCDTLRGSTRSTCAPSSPPTPATLGATIKSSEIALPPPPVPPKSEAVREECRLLNAPPVPPRSAKPLSTSPSIPPRTVKPVRPQTRSPSPTLSYYSSGLHNIITQSDTSPPNSAPVSCYPCTRVKSDSVDPKSPFGSPSAEALSSRLSWPNHYSGASENQTRSDFLLDPSRSYSYPRQKTPGTPKRTCPAPFDFEGCELLGSPPSTTSAEFSSSGVPSCPKSASYCLENSEDNSFAAGMTKQSVSCPALPPRAPKPVEQKATPETSPLPLKIDGAEEDPTAGSLDLSEDQYFVRKGMQDIFSVSYPFSSPLHLQLAPRSCGDGSPWQPPADLSGLSIEEVSKSLRFIGLSEDVIAFFVTEKIDGNLLVQLTEEILSEDFKLSKLQVKKILQFINGWRPKI.

A CABIT region spans residues 12 to 320; the sequence is KDVKWSPVAM…HQVKGDMWPE (309 aa). The residue at position 105 (Tyr105) is a Phosphotyrosine. The interval 427-448 is disordered; sequence GDSGSDYLFPEANEESAGIPGK. A Phosphotyrosine modification is found at Tyr453. Disordered stretches follow at residues 460–501 and 530–572; these read EGKP…ATLG and LNAP…SYYS. The segment at 498 to 550 is necessary for interaction with GRB2; it reads ATLGATIKSSEIALPPPPVPPKSEAVREECRLLNAPPVPPRSAKPLSTSPSIP. The span at 560–572 shows a compositional bias: polar residues; that stretch reads QTRSPSPTLSYYS. Ser609 and Ser613 each carry phosphoserine. Polar residues-rich tracts occupy residues 630–639 and 647–657; these read SGASENQTRS and RSYSYPRQKTP. Disordered regions lie at residues 630–664 and 722–759; these read SGASENQTRSDFLLDPSRSYSYPRQKTPGTPKRTC and CPALPPRAPKPVEQKATPETSPLPLKIDGAEEDPTAGS. The 66-residue stretch at 811–876 folds into the SAM domain; it reads LSIEEVSKSL…QFINGWRPKI (66 aa).

It belongs to the GAREM family. Interacts with EGFR. Interacts (via proline-rich domain and phosphorylated at Tyr-105 and Tyr-453) with GRB2 (via SH3 domains); the interaction occurs upon EGF stimulation. Interacts (phosphorylated at Tyr-453) with PTPN11; the interaction increases MAPK/ERK activity and does not affect the GRB2/SOS complex formation. Post-translationally, on EGF stimulation, phosphorylated on Tyr-105 and Tyr-453.

Functionally, acts as an adapter protein that plays a role in intracellular signaling cascades triggered either by the cell surface activated epidermal growth factor receptor and/or cytoplasmic protein tyrosine kinases. Promotes activation of the MAPK/ERK signaling pathway. Plays a role in the regulation of cell proliferation. The protein is GRB2-associated and regulator of MAPK protein (Garem1) of Mus musculus (Mouse).